The sequence spans 132 residues: D-ribose pyranase (132 aa).

Catalysis depends on His-20, which acts as the Proton donor. Substrate-binding positions include Asp-28, His-99, and 121-123 (YSN).

Belongs to the RbsD / FucU family. RbsD subfamily. In terms of assembly, homodecamer.

The protein resides in the cytoplasm. It carries out the reaction beta-D-ribopyranose = beta-D-ribofuranose. It functions in the pathway carbohydrate metabolism; D-ribose degradation; D-ribose 5-phosphate from beta-D-ribopyranose: step 1/2. In terms of biological role, catalyzes the interconversion of beta-pyran and beta-furan forms of D-ribose. The protein is D-ribose pyranase of Streptococcus uberis (strain ATCC BAA-854 / 0140J).